A 729-amino-acid chain; its full sequence is Polyribonucleotide nucleotidyltransferase (729 aa).

2 residues coordinate Mg(2+): aspartate 510 and aspartate 516. The 60-residue stretch at 576–635 (PRVISVKIPVDKIGEVIGPKGKMINQIQADSGAEITVEDDGTIYIGAADGTSAETARSAI) folds into the KH domain. An S1 motif domain is found at 647–719 (GERYLGTIVK…ARGKISLSPS (73 aa)).

The protein belongs to the polyribonucleotide nucleotidyltransferase family. Requires Mg(2+) as cofactor.

It is found in the cytoplasm. It catalyses the reaction RNA(n+1) + phosphate = RNA(n) + a ribonucleoside 5'-diphosphate. In terms of biological role, involved in mRNA degradation. Catalyzes the phosphorolysis of single-stranded polyribonucleotides processively in the 3'- to 5'-direction. The chain is Polyribonucleotide nucleotidyltransferase from Frankia alni (strain DSM 45986 / CECT 9034 / ACN14a).